A 130-amino-acid polypeptide reads, in one-letter code: Putative pre-16S rRNA nuclease (130 aa).

This sequence belongs to the YqgF nuclease family.

It localises to the cytoplasm. Functionally, could be a nuclease involved in processing of the 5'-end of pre-16S rRNA. The protein is Putative pre-16S rRNA nuclease of Sulfurimonas denitrificans (strain ATCC 33889 / DSM 1251) (Thiomicrospira denitrificans (strain ATCC 33889 / DSM 1251)).